Here is a 247-residue protein sequence, read N- to C-terminus: Segregation and condensation protein A (247 aa).

Belongs to the ScpA family. Component of a cohesin-like complex composed of ScpA, ScpB and the Smc homodimer, in which ScpA and ScpB bind to the head domain of Smc. The presence of the three proteins is required for the association of the complex with DNA.

It is found in the cytoplasm. Its function is as follows. Participates in chromosomal partition during cell division. May act via the formation of a condensin-like complex containing Smc and ScpB that pull DNA away from mid-cell into both cell halves. This chain is Segregation and condensation protein A, found in Bacillus cereus (strain AH187).